The following is a 288-amino-acid chain: Acetyl-coenzyme A carboxylase carboxyl transferase subunit beta (288 aa).

One can recognise a CoA carboxyltransferase N-terminal domain in the interval 24-288 (LWVKCPESGE…TRTPRASEAA (265 aa)).

The protein belongs to the AccD/PCCB family. As to quaternary structure, acetyl-CoA carboxylase is a heterohexamer composed of biotin carboxyl carrier protein (AccB), biotin carboxylase (AccC) and two subunits each of ACCase subunit alpha (AccA) and ACCase subunit beta (AccD).

The protein localises to the cytoplasm. It catalyses the reaction N(6)-carboxybiotinyl-L-lysyl-[protein] + acetyl-CoA = N(6)-biotinyl-L-lysyl-[protein] + malonyl-CoA. It functions in the pathway lipid metabolism; malonyl-CoA biosynthesis; malonyl-CoA from acetyl-CoA: step 1/1. Its function is as follows. Component of the acetyl coenzyme A carboxylase (ACC) complex. Biotin carboxylase (BC) catalyzes the carboxylation of biotin on its carrier protein (BCCP) and then the CO(2) group is transferred by the transcarboxylase to acetyl-CoA to form malonyl-CoA. This chain is Acetyl-coenzyme A carboxylase carboxyl transferase subunit beta, found in Methylocella silvestris (strain DSM 15510 / CIP 108128 / LMG 27833 / NCIMB 13906 / BL2).